The sequence spans 806 residues: GPI ethanolamine phosphate transferase 2 (806 aa).

N-linked (GlcNAc...) asparagine glycosylation is found at Asn-70, Asn-184, and Asn-242. A run of 3 helical transmembrane segments spans residues 396-416, 425-445, and 451-471; these read MLFL…YCYI, SVLM…SSFV, and IWWW…PSCT. An N-linked (GlcNAc...) asparagine glycan is attached at Asn-488. The next 8 membrane-spanning stretches (helical) occupy residues 508–528, 532–552, 593–613, 624–644, 664–684, 706–726, 745–765, and 782–804; these read PSIK…DGFT, LLSI…TCWA, LFFK…VVFA, LFTI…FLVF, CEMF…QFGG, IYVV…YWSL, LSSM…CICM, and LLGW…LLMV.

This sequence belongs to the PIGG/PIGN/PIGO family. PIGG subfamily.

Its subcellular location is the endoplasmic reticulum membrane. It functions in the pathway glycolipid biosynthesis; glycosylphosphatidylinositol-anchor biosynthesis. In terms of biological role, ethanolamine phosphate transferase involved in glycosylphosphatidylinositol-anchor biosynthesis. Transfers ethanolamine phosphate to the GPI second mannose. This is GPI ethanolamine phosphate transferase 2 (LAS21) from Eremothecium gossypii (strain ATCC 10895 / CBS 109.51 / FGSC 9923 / NRRL Y-1056) (Yeast).